Consider the following 485-residue polypeptide: Aspartyl/glutamyl-tRNA(Asn/Gln) amidotransferase subunit B (485 aa).

The protein belongs to the GatB/GatE family. GatB subfamily. As to quaternary structure, heterotrimer of A, B and C subunits.

It catalyses the reaction L-glutamyl-tRNA(Gln) + L-glutamine + ATP + H2O = L-glutaminyl-tRNA(Gln) + L-glutamate + ADP + phosphate + H(+). It carries out the reaction L-aspartyl-tRNA(Asn) + L-glutamine + ATP + H2O = L-asparaginyl-tRNA(Asn) + L-glutamate + ADP + phosphate + 2 H(+). In terms of biological role, allows the formation of correctly charged Asn-tRNA(Asn) or Gln-tRNA(Gln) through the transamidation of misacylated Asp-tRNA(Asn) or Glu-tRNA(Gln) in organisms which lack either or both of asparaginyl-tRNA or glutaminyl-tRNA synthetases. The reaction takes place in the presence of glutamine and ATP through an activated phospho-Asp-tRNA(Asn) or phospho-Glu-tRNA(Gln). The sequence is that of Aspartyl/glutamyl-tRNA(Asn/Gln) amidotransferase subunit B from Borreliella afzelii (strain PKo) (Borrelia afzelii).